A 469-amino-acid polypeptide reads, in one-letter code: Phosphatidylinositol 4-kinase type 2-beta (469 aa).

The segment at 1–84 (MAEACEPTRP…LDRTRTTSSE (84 aa)) is disordered. Phosphoserine is present on S37. The PI3K/PI4K catalytic domain occupies 108 to 439 (GVFPERISQG…AQMPCVIVEC (332 aa)). Positions 114–120 (ISQGSSG) are G-loop. Residues S121 and K136 each contribute to the ATP site. Residues 141-143 (EPY) are important for substrate binding. An important for interaction with membranes region spans residues 149–162 (KWTKYVHKVCCPCC). ATP-binding positions include 245-248 (QLFV) and 259-260 (RR). The segment at 252 to 260 (KEAEYWLRR) is important for interaction with membranes. Positions 289-297 (RNTDRGNDN) are catalytic loop. Positions 330-350 (AIDNGLAFPFKHPDEWRAYPF) are activation loop. Residue D332 participates in ATP binding. The tract at residues 345–354 (WRAYPFHWAW) is important for interaction with membranes.

Belongs to the PI3/PI4-kinase family. Type II PI4K subfamily.

The protein localises to the cytoplasm. It is found in the cytosol. It localises to the golgi apparatus membrane. The protein resides in the endoplasmic reticulum membrane. Its subcellular location is the cell membrane. The protein localises to the early endosome membrane. It catalyses the reaction a 1,2-diacyl-sn-glycero-3-phospho-(1D-myo-inositol) + ATP = a 1,2-diacyl-sn-glycero-3-phospho-(1D-myo-inositol 4-phosphate) + ADP + H(+). Functionally, together with PI4K2A and the type III PI4Ks (PIK4CA and PIK4CB) it contributes to the overall PI4-kinase activity of the cell. This contribution may be especially significant in plasma membrane, endosomal and Golgi compartments. The phosphorylation of phosphatidylinositol (PI) to PI4P is the first committed step in the generation of phosphatidylinositol 4,5-bisphosphate (PIP2), a precursor of the second messenger inositol 1,4,5-trisphosphate (InsP3). Contributes to the production of InsP3 in stimulated cells and is likely to be involved in the regulation of vesicular trafficking. This is Phosphatidylinositol 4-kinase type 2-beta (Pi4k2b) from Mus musculus (Mouse).